An 878-amino-acid polypeptide reads, in one-letter code: Alanine--tRNA ligase (878 aa).

Positions 567, 571, 669, and 673 each coordinate Zn(2+).

This sequence belongs to the class-II aminoacyl-tRNA synthetase family. It depends on Zn(2+) as a cofactor.

The protein resides in the cytoplasm. It carries out the reaction tRNA(Ala) + L-alanine + ATP = L-alanyl-tRNA(Ala) + AMP + diphosphate. Functionally, catalyzes the attachment of alanine to tRNA(Ala) in a two-step reaction: alanine is first activated by ATP to form Ala-AMP and then transferred to the acceptor end of tRNA(Ala). Also edits incorrectly charged Ser-tRNA(Ala) and Gly-tRNA(Ala) via its editing domain. The protein is Alanine--tRNA ligase of Rickettsia massiliae (strain Mtu5).